The primary structure comprises 410 residues: Argininosuccinate synthase (410 aa).

Residues 14–22 (AYSGGLDTS) and A41 each bind ATP. Y92 and S97 together coordinate L-citrulline. G122 is an ATP binding site. 3 residues coordinate L-aspartate: T124, N128, and D129. Position 128 (N128) interacts with L-citrulline. L-citrulline contacts are provided by R132, S183, S192, E268, and Y280.

This sequence belongs to the argininosuccinate synthase family. Type 1 subfamily. As to quaternary structure, homotetramer.

It is found in the cytoplasm. The catalysed reaction is L-citrulline + L-aspartate + ATP = 2-(N(omega)-L-arginino)succinate + AMP + diphosphate + H(+). The protein operates within amino-acid biosynthesis; L-arginine biosynthesis; L-arginine from L-ornithine and carbamoyl phosphate: step 2/3. This chain is Argininosuccinate synthase, found in Parvibaculum lavamentivorans (strain DS-1 / DSM 13023 / NCIMB 13966).